Consider the following 404-residue polypeptide: Serine/threonine transporter SstT (404 aa).

8 helical membrane passes run 10–30 (ILGGNLVLRIAVGLVLGICLA), 53–73 (AIAPILVFVLVMASIANKEVG), 81–101 (ILVMYVLGTFVAAVTAVILSY), 140–160 (AITNGNFIGILAWSIGLGIAL), 177–197 (AVSFVVKVVIAFAPIGVFGLV), 215–235 (LLAVLLGAMAIVAFILNPLLV), 287–307 (IAIPLGANINMAGAAITITVL), and 329–349 (IVASICACGASGVAGGSLLLI).

Belongs to the dicarboxylate/amino acid:cation symporter (DAACS) (TC 2.A.23) family.

The protein resides in the cell inner membrane. The enzyme catalyses L-serine(in) + Na(+)(in) = L-serine(out) + Na(+)(out). It catalyses the reaction L-threonine(in) + Na(+)(in) = L-threonine(out) + Na(+)(out). Involved in the import of serine and threonine into the cell, with the concomitant import of sodium (symport system). The chain is Serine/threonine transporter SstT from Glaesserella parasuis serovar 5 (strain SH0165) (Haemophilus parasuis).